A 371-amino-acid chain; its full sequence is Chaperone protein DnaJ (371 aa).

A J domain is found at 5–69 (DYYEVLGLSK…QKRAQYDQFG (65 aa)). Residues 133-215 (GKELNVEIPV…CHGSGKVRKR (83 aa)) form a CR-type zinc finger. Residues Cys-146, Cys-149, Cys-163, Cys-166, Cys-189, Cys-192, Cys-203, and Cys-206 each contribute to the Zn(2+) site. 4 CXXCXGXG motif repeats span residues 146–153 (CDTCKGSG), 163–170 (CKHCSGSG), 189–196 (CSHCSGTG), and 203–210 (CTTCHGSG).

Belongs to the DnaJ family. Homodimer. Zn(2+) serves as cofactor.

It is found in the cytoplasm. Its function is as follows. Participates actively in the response to hyperosmotic and heat shock by preventing the aggregation of stress-denatured proteins and by disaggregating proteins, also in an autonomous, DnaK-independent fashion. Unfolded proteins bind initially to DnaJ; upon interaction with the DnaJ-bound protein, DnaK hydrolyzes its bound ATP, resulting in the formation of a stable complex. GrpE releases ADP from DnaK; ATP binding to DnaK triggers the release of the substrate protein, thus completing the reaction cycle. Several rounds of ATP-dependent interactions between DnaJ, DnaK and GrpE are required for fully efficient folding. Also involved, together with DnaK and GrpE, in the DNA replication of plasmids through activation of initiation proteins. The polypeptide is Chaperone protein DnaJ (Bacillus anthracis (strain A0248)).